The primary structure comprises 67 residues: Large ribosomal subunit protein uL29 (67 aa).

Belongs to the universal ribosomal protein uL29 family.

In Halorhodospira halophila (strain DSM 244 / SL1) (Ectothiorhodospira halophila (strain DSM 244 / SL1)), this protein is Large ribosomal subunit protein uL29.